The chain runs to 101 residues: Small ribosomal subunit protein uS14 (101 aa).

The protein belongs to the universal ribosomal protein uS14 family. Part of the 30S ribosomal subunit. Contacts proteins S3 and S10.

Functionally, binds 16S rRNA, required for the assembly of 30S particles and may also be responsible for determining the conformation of the 16S rRNA at the A site. In Cupriavidus pinatubonensis (strain JMP 134 / LMG 1197) (Cupriavidus necator (strain JMP 134)), this protein is Small ribosomal subunit protein uS14.